Here is a 936-residue protein sequence, read N- to C-terminus: Protein translocase subunit SecA (936 aa).

Residues Gln87, 105-109 (GEGKT), and Asp515 contribute to the ATP site. Residues Cys920, Cys922, Cys931, and His932 each coordinate Zn(2+).

This sequence belongs to the SecA family. In terms of assembly, monomer and homodimer. Part of the essential Sec protein translocation apparatus which comprises SecA, SecYEG and auxiliary proteins SecDF-YajC and YidC. Requires Zn(2+) as cofactor.

The protein resides in the cell inner membrane. It is found in the cytoplasm. It catalyses the reaction ATP + H2O + cellular proteinSide 1 = ADP + phosphate + cellular proteinSide 2.. Part of the Sec protein translocase complex. Interacts with the SecYEG preprotein conducting channel. Has a central role in coupling the hydrolysis of ATP to the transfer of proteins into and across the cell membrane, serving both as a receptor for the preprotein-SecB complex and as an ATP-driven molecular motor driving the stepwise translocation of polypeptide chains across the membrane. In Paraburkholderia xenovorans (strain LB400), this protein is Protein translocase subunit SecA.